The sequence spans 205 residues: MRLRLFLAASALALLSGCAGLTSHEALEGQGDAQTWKTHKQQLSELDAWQIDGKVGIRAPRDSGSGTLFWLQRQGYYDIRLSGPLGRGAARLTGREGAVSLEVAGQGRYQAESPEALLEQQLGWRLPVSHLLWWVRGLPAPDSKSRLTLDADSRLARLEQDGWQIEYTRYAEQNGYWLPERLKLHGQDLDITLVIKDWQPRQLGR.

Positions 1–17 are cleaved as a signal peptide; the sequence is MRLRLFLAASALALLSG. The N-palmitoyl cysteine moiety is linked to residue Cys18. Cys18 carries S-diacylglycerol cysteine lipidation.

Belongs to the LolB family. Monomer.

Its subcellular location is the cell outer membrane. Plays a critical role in the incorporation of lipoproteins in the outer membrane after they are released by the LolA protein. The chain is Outer-membrane lipoprotein LolB from Pseudomonas paraeruginosa (strain DSM 24068 / PA7) (Pseudomonas aeruginosa (strain PA7)).